A 329-amino-acid polypeptide reads, in one-letter code: Secretory carrier-associated membrane protein 2 (329 aa).

A disordered region spans residues M1–P74. Over M1–Y153 the chain is Cytoplasmic. Polar residues-rich tracts occupy residues Q19–Q31 and F40–A51. The helical transmembrane segment at Y154–F174 threads the bilayer. The Lumenal portion of the chain corresponds to T175–G181. The chain crosses the membrane as a helical span at residues T182 to W202. Over Y203–F218 the chain is Cytoplasmic. The segment at Y203 to F218 is interaction with SLC9A7. The helical transmembrane segment at F219–L239 threads the bilayer. The Lumenal segment spans residues P240–T262. Residues I263–L283 traverse the membrane as a helical segment. The Cytoplasmic segment spans residues Q284–N329. Phosphoserine is present on residues S319 and S320.

Belongs to the SCAMP family. In terms of assembly, interacts with SLC6A4 and SLC9A7. Interacts with SLC9A5; this interaction regulates SLC9A5 cell-surface targeting and SLC9A5 activity.

The protein resides in the golgi apparatus. It localises to the trans-Golgi network membrane. It is found in the recycling endosome membrane. Its function is as follows. Functions in post-Golgi recycling pathways. Acts as a recycling carrier to the cell surface. The polypeptide is Secretory carrier-associated membrane protein 2 (Scamp2) (Mus musculus (Mouse)).